The chain runs to 364 residues: Chorismate synthase (364 aa).

Arg48 contacts NADP(+). Residues 131–133 (RSS), 243–244 (NA), Gly288, 303–307 (KPTSS), and Arg329 each bind FMN.

Belongs to the chorismate synthase family. In terms of assembly, homotetramer. The cofactor is FMNH2.

It carries out the reaction 5-O-(1-carboxyvinyl)-3-phosphoshikimate = chorismate + phosphate. It functions in the pathway metabolic intermediate biosynthesis; chorismate biosynthesis; chorismate from D-erythrose 4-phosphate and phosphoenolpyruvate: step 7/7. Functionally, catalyzes the anti-1,4-elimination of the C-3 phosphate and the C-6 proR hydrogen from 5-enolpyruvylshikimate-3-phosphate (EPSP) to yield chorismate, which is the branch point compound that serves as the starting substrate for the three terminal pathways of aromatic amino acid biosynthesis. This reaction introduces a second double bond into the aromatic ring system. In Brucella abortus (strain S19), this protein is Chorismate synthase.